The following is a 376-amino-acid chain: Ribonucleoside-diphosphate reductase subunit beta (376 aa).

Residues Asp85, Glu116, and His119 each contribute to the Fe cation site. Tyr123 is an active-site residue. Fe cation contacts are provided by Glu205, Glu239, and His242.

It belongs to the ribonucleoside diphosphate reductase small chain family. Tetramer of two alpha and two beta subunits. Fe cation is required as a cofactor.

It catalyses the reaction a 2'-deoxyribonucleoside 5'-diphosphate + [thioredoxin]-disulfide + H2O = a ribonucleoside 5'-diphosphate + [thioredoxin]-dithiol. Its function is as follows. Provides the precursors necessary for DNA synthesis. Catalyzes the biosynthesis of deoxyribonucleotides from the corresponding ribonucleotides. The polypeptide is Ribonucleoside-diphosphate reductase subunit beta (nrdB) (Haemophilus influenzae (strain ATCC 51907 / DSM 11121 / KW20 / Rd)).